A 109-amino-acid chain; its full sequence is Large ribosomal subunit protein bL31B (109 aa).

The segment at 79-109 is disordered; it reads NVRQPAQQPQPEEDALPAAKGKKKVVTKKKK. The segment covering 98 to 109 has biased composition (basic residues); the sequence is KGKKKVVTKKKK.

The protein belongs to the bacterial ribosomal protein bL31 family. Type B subfamily. As to quaternary structure, part of the 50S ribosomal subunit.

The chain is Large ribosomal subunit protein bL31B from Chlamydia pneumoniae (Chlamydophila pneumoniae).